An 82-amino-acid chain; its full sequence is Small ribosomal subunit protein bS20 (82 aa).

A compositionally biased stretch (basic residues) spans methionine 1–isoleucine 11. Residues methionine 1–arginine 20 are disordered.

It belongs to the bacterial ribosomal protein bS20 family.

Binds directly to 16S ribosomal RNA. The sequence is that of Small ribosomal subunit protein bS20 from Christiangramia forsetii (strain DSM 17595 / CGMCC 1.15422 / KT0803) (Gramella forsetii).